A 570-amino-acid chain; its full sequence is Urease subunit alpha (570 aa).

The region spanning 131-570 (GGIDSHIHFI…LPMTQRYFLF (440 aa)) is the Urease domain. Residues histidine 136, histidine 138, and lysine 219 each coordinate Ni(2+). Lysine 219 carries the N6-carboxylysine modification. A substrate-binding site is contributed by histidine 221. Histidine 248 and histidine 274 together coordinate Ni(2+). Catalysis depends on histidine 322, which acts as the Proton donor. Aspartate 362 lines the Ni(2+) pocket.

Belongs to the metallo-dependent hydrolases superfamily. Urease alpha subunit family. As to quaternary structure, heterotrimer of UreA (gamma), UreB (beta) and UreC (alpha) subunits. Three heterotrimers associate to form the active enzyme. It depends on Ni cation as a cofactor. In terms of processing, carboxylation allows a single lysine to coordinate two nickel ions.

Its subcellular location is the cytoplasm. The enzyme catalyses urea + 2 H2O + H(+) = hydrogencarbonate + 2 NH4(+). It participates in nitrogen metabolism; urea degradation; CO(2) and NH(3) from urea (urease route): step 1/1. This Trichodesmium erythraeum (strain IMS101) protein is Urease subunit alpha.